A 115-amino-acid chain; its full sequence is U3-lycotoxin-Ls1a (115 aa).

Residues 1 to 20 (MKFVLLFGVFLVTLFSYSSA) form the signal peptide. Positions 21–44 (EMLDDFDQAAEDELLSLIEKEEAR) are excised as a propeptide. 4 disulfides stabilise this stretch: cysteine 48–cysteine 63, cysteine 55–cysteine 72, cysteine 62–cysteine 87, and cysteine 74–cysteine 85.

It belongs to the neurotoxin 19 (CSTX) family. 01 subfamily. In terms of tissue distribution, expressed by the venom gland.

The protein resides in the secreted. The sequence is that of U3-lycotoxin-Ls1a from Lycosa singoriensis (Wolf spider).